Here is a 429-residue protein sequence, read N- to C-terminus: Enolase (429 aa).

(2R)-2-phosphoglycerate is bound at residue glutamine 164. Glutamate 206 functions as the Proton donor in the catalytic mechanism. Residues aspartate 243, glutamate 286, and aspartate 313 each contribute to the Mg(2+) site. The (2R)-2-phosphoglycerate site is built by lysine 338, arginine 367, serine 368, and lysine 389. Residue lysine 338 is the Proton acceptor of the active site.

Belongs to the enolase family. In terms of assembly, homooctamer. Forms a ring-shaped particle. Mg(2+) is required as a cofactor.

Its subcellular location is the cytoplasm. The protein resides in the secreted. The protein localises to the cell surface. The enzyme catalyses (2R)-2-phosphoglycerate = phosphoenolpyruvate + H2O. It functions in the pathway carbohydrate degradation; glycolysis; pyruvate from D-glyceraldehyde 3-phosphate: step 4/5. Its activity is regulated as follows. Inhibited by fluoride and phosphate. Functionally, catalyzes the reversible conversion of 2-phosphoglycerate (2-PG) into phosphoenolpyruvate (PEP). It is essential for the degradation of carbohydrates via glycolysis. The chain is Enolase from Thermotoga maritima (strain ATCC 43589 / DSM 3109 / JCM 10099 / NBRC 100826 / MSB8).